Consider the following 344-residue polypeptide: Dihydroorotase (344 aa).

The Zn(2+) site is built by His13 and His15. Substrate-binding positions include 15 to 17 and Asn41; that span reads HLR. Residues Lys99, His136, and His174 each contribute to the Zn(2+) site. Residue Lys99 is modified to N6-carboxylysine. Residue His136 participates in substrate binding. Leu219 contacts substrate. Residue Asp247 coordinates Zn(2+). Residue Asp247 is part of the active site. Substrate contacts are provided by His251 and Ala263.

It belongs to the metallo-dependent hydrolases superfamily. DHOase family. Class II DHOase subfamily. In terms of assembly, homodimer. Zn(2+) serves as cofactor.

It carries out the reaction (S)-dihydroorotate + H2O = N-carbamoyl-L-aspartate + H(+). It participates in pyrimidine metabolism; UMP biosynthesis via de novo pathway; (S)-dihydroorotate from bicarbonate: step 3/3. Its function is as follows. Catalyzes the reversible cyclization of carbamoyl aspartate to dihydroorotate. The chain is Dihydroorotase from Acinetobacter baumannii (strain AB307-0294).